A 422-amino-acid chain; its full sequence is MALRGSHRLQVILKRCIASPLFHSHAPNRRSSQPAIKGGEPNSNGNSGHDQQNGERKGKGWRRLVSFFVPFSLGAVVSAAVIKREDFTPTIAASKMTGRRRDFNFIADVVAGCADSVVYIEIKDTRHFDYFSGQPITASNGSGFIIEQNGLILTNAHVVINKPHTMVQVRLSDGRTFPATIEDVDQTSDLATLRIQVNNLSVMRLGKSSTLRSGEWVVALGSPLALSNTVTAGVISSTQRASQELGLRNRDINYLQTDAAITFGNSGGPLVNLDGEAIGVNSMKVTAGISFAIPIDYVKVFLERAAEKRKKGSAYKTGYPVKRYMGITMLTLTPDILFELKSRSQNMPSNLTHGVLVWKVIVGSPAHSGGLQPGDIVTHINKKEIKNSSDVYDALADNSKNLDIVILRGVKQMHVTITPEDP.

The transit peptide at 1 to 17 (MALRGSHRLQVILKRCI) directs the protein to the mitochondrion. The propeptide occupies 18-74 (ASPLFHSHAPNRRSSQPAIKGGEPNSNGNSGHDQQNGERKGKGWRRLVSFFVPFSLG). Residues 24-56 (SHAPNRRSSQPAIKGGEPNSNGNSGHDQQNGER) are disordered. The segment covering 41–51 (PNSNGNSGHDQ) has biased composition (polar residues). The helical transmembrane segment at 64–82 (LVSFFVPFSLGAVVSAAVI) threads the bilayer. Short sequence motifs (IAP-binding) lie at residues 75–78 (AVVS) and 94–97 (SKMT). The serine protease stretch occupies residues 139–302 (SNGSGFIIEQ…IPIDYVKVFL (164 aa)). Active-site charge relay system residues include His-157, Asp-189, and Ser-266. The PDZ domain maps to 325–410 (MGITMLTLTP…NLDIVILRGV (86 aa)).

Belongs to the peptidase S1C family. Interacts with th/DIAP1 (via BIR 2 domain).

It is found in the mitochondrion intermembrane space. It localises to the mitochondrion membrane. It catalyses the reaction Cleavage of non-polar aliphatic amino-acids at the P1 position, with a preference for Val, Ile and Met. At the P2 and P3 positions, Arg is selected most strongly with a secondary preference for other hydrophilic residues.. Functionally, serine protease that shows proteolytic activity against a non-specific substrate beta-casein. Promotes or induces cell death either by direct binding to and inhibition of BIRC proteins (also called inhibitor of apoptosis proteins, IAPs), leading to an increase in caspase activity, or by a BIRC inhibition-independent, caspase-independent and serine protease activity-dependent mechanism. Can antagonize antiapoptotic activity of th/Diap1 by directly inducing the degradation of th/Diap1. This chain is Serine protease HTRA2, mitochondrial, found in Drosophila erecta (Fruit fly).